The following is a 233-amino-acid chain: Protease inhibitor Egf1.0 (233 aa).

The N-terminal stretch at 1–28 (MYIDTGIMSNNIFLFAFFALVGLTRIEA) is a signal peptide. The TIL domain maps to 52-104 (CRENEHYNSTRIECEEECNDRNNKLCYRFQQFCWCNEGYIRNSSHICVKLEDC). The segment at 201 to 233 (FGKPKNSSAEKKPLETETQAQKFNGIIDQETLD) is disordered.

It belongs to the polydnaviridae EGF-like motif protein family. As to quaternary structure, interacts with host PAP1 and PAP3.

Functionally, counteracts the host humoral immune response by inhibiting the processing and the amidolytic activity of host PAP3. Thereby, melanization of host hemolymph, normally producing several reactive intermediates toxic for viruses, is deregulated and proper immune response cannot occur. This Microplitis demolitor (Parasitoid wasp) protein is Protease inhibitor Egf1.0 (O12).